Consider the following 258-residue polypeptide: Acyl-[acyl-carrier-protein]--UDP-N-acetylglucosamine O-acyltransferase (258 aa).

Belongs to the transferase hexapeptide repeat family. LpxA subfamily. As to quaternary structure, homotrimer.

The protein resides in the cytoplasm. The enzyme catalyses a (3R)-hydroxyacyl-[ACP] + UDP-N-acetyl-alpha-D-glucosamine = a UDP-3-O-[(3R)-3-hydroxyacyl]-N-acetyl-alpha-D-glucosamine + holo-[ACP]. It functions in the pathway glycolipid biosynthesis; lipid IV(A) biosynthesis; lipid IV(A) from (3R)-3-hydroxytetradecanoyl-[acyl-carrier-protein] and UDP-N-acetyl-alpha-D-glucosamine: step 1/6. Functionally, involved in the biosynthesis of lipid A, a phosphorylated glycolipid that anchors the lipopolysaccharide to the outer membrane of the cell. The polypeptide is Acyl-[acyl-carrier-protein]--UDP-N-acetylglucosamine O-acyltransferase (Azotobacter vinelandii (strain DJ / ATCC BAA-1303)).